Reading from the N-terminus, the 156-residue chain is Small ribosomal subunit protein uS7 (156 aa).

The protein belongs to the universal ribosomal protein uS7 family. Part of the 30S ribosomal subunit. Contacts proteins S9 and S11.

One of the primary rRNA binding proteins, it binds directly to 16S rRNA where it nucleates assembly of the head domain of the 30S subunit. Is located at the subunit interface close to the decoding center, probably blocks exit of the E-site tRNA. The sequence is that of Small ribosomal subunit protein uS7 from Methylorubrum extorquens (strain CM4 / NCIMB 13688) (Methylobacterium extorquens).